Here is a 309-residue protein sequence, read N- to C-terminus: Ribonuclease Z (309 aa).

Residues H63, H65, D67, H68, H145, D216, and H274 each contribute to the Zn(2+) site. Catalysis depends on D67, which acts as the Proton acceptor.

Belongs to the RNase Z family. As to quaternary structure, homodimer. Zn(2+) is required as a cofactor.

The enzyme catalyses Endonucleolytic cleavage of RNA, removing extra 3' nucleotides from tRNA precursor, generating 3' termini of tRNAs. A 3'-hydroxy group is left at the tRNA terminus and a 5'-phosphoryl group is left at the trailer molecule.. In terms of biological role, zinc phosphodiesterase, which displays some tRNA 3'-processing endonuclease activity. Probably involved in tRNA maturation, by removing a 3'-trailer from precursor tRNA. In Streptococcus pyogenes serotype M1, this protein is Ribonuclease Z.